The following is a 268-amino-acid chain: Deoxyuridine 5'-triphosphate nucleotidohydrolase (268 aa).

Residues 172 to 174 (RSS) and 263 to 264 (FG) contribute to the substrate site.

It belongs to the dUTPase family. Requires Mg(2+) as cofactor.

It catalyses the reaction dUTP + H2O = dUMP + diphosphate + H(+). Functionally, involved in nucleotide metabolism: produces dUMP, the immediate precursor of thymidine nucleotides and decreases the intracellular concentration of dUTP to avoid uracil incorporation into viral DNA. In Suid herpesvirus 1 (strain Kaplan) (SuHV-1), this protein is Deoxyuridine 5'-triphosphate nucleotidohydrolase.